Reading from the N-terminus, the 200-residue chain is MDKTQPHPLFKLATELGPLIVFFFVNAKFNLFAATGAFMVAIIAALIASYVVTRHIPLMALVTAVVVIVFGTLTLVLHDETFIKVKPTIIYGLFAAVLGGGLVFNRSFIAIMFDQMFNLTPAGWRILTFRWALFFAGMAVLNEIIWRTQSTDFWVGFKAFGVLPLTMIFAIAQMPLIKRYHQDPASLEASDAAEGDVSKG.

6 helical membrane passes run His-7 to Ala-27, Phe-32 to Val-52, Ile-56 to Val-76, Leu-93 to Phe-113, Ile-126 to Trp-146, and Phe-153 to Gln-173.

It belongs to the YciB family.

The protein localises to the cell inner membrane. Its function is as follows. Plays a role in cell envelope biogenesis, maintenance of cell envelope integrity and membrane homeostasis. The sequence is that of Inner membrane-spanning protein YciB from Bradyrhizobium sp. (strain ORS 278).